Here is a 558-residue protein sequence, read N- to C-terminus: Membrane protein insertase YidC (558 aa).

6 consecutive transmembrane segments (helical) span residues Val6 to Pro26, Leu326 to Phe348, Gly355 to Phe377, Leu424 to Ile444, Val469 to Ile489, and Ile512 to Val532.

The protein belongs to the OXA1/ALB3/YidC family. Type 1 subfamily. Interacts with the Sec translocase complex via SecD. Specifically interacts with transmembrane segments of nascent integral membrane proteins during membrane integration.

It localises to the cell inner membrane. Functionally, required for the insertion and/or proper folding and/or complex formation of integral membrane proteins into the membrane. Involved in integration of membrane proteins that insert both dependently and independently of the Sec translocase complex, as well as at least some lipoproteins. Aids folding of multispanning membrane proteins. This Pelagibacter ubique (strain HTCC1062) protein is Membrane protein insertase YidC.